Reading from the N-terminus, the 433-residue chain is Trigger factor (433 aa).

Residues 161-246 (GKRVSIDFVG…VNKVEARELP (86 aa)) form the PPIase FKBP-type domain.

This sequence belongs to the FKBP-type PPIase family. Tig subfamily.

It localises to the cytoplasm. It catalyses the reaction [protein]-peptidylproline (omega=180) = [protein]-peptidylproline (omega=0). In terms of biological role, involved in protein export. Acts as a chaperone by maintaining the newly synthesized protein in an open conformation. Functions as a peptidyl-prolyl cis-trans isomerase. The sequence is that of Trigger factor from Vibrio cholerae serotype O1 (strain ATCC 39541 / Classical Ogawa 395 / O395).